The sequence spans 440 residues: Xaa-Pro dipeptidase (440 aa).

The Mn(2+) site is built by aspartate 244, aspartate 255, histidine 335, glutamate 380, and glutamate 419.

It belongs to the peptidase M24B family. Bacterial-type prolidase subfamily. The cofactor is Mn(2+).

The catalysed reaction is Xaa-L-Pro dipeptide + H2O = an L-alpha-amino acid + L-proline. Functionally, splits dipeptides with a prolyl residue in the C-terminal position. The protein is Xaa-Pro dipeptidase of Shewanella baltica (strain OS195).